Reading from the N-terminus, the 329-residue chain is GTPase Obg (329 aa).

An Obg domain is found at 1–159 (MQFIDEAKIF…MWVWLHLKLL (159 aa)). Residues 160 to 327 (SDVGLVGLPN…LLANILSELQ (168 aa)) enclose the OBG-type G domain. GTP contacts are provided by residues 166–173 (GLPNAGKS), 191–195 (FTTLT), 212–215 (DIPG), 279–282 (TKTD), and 308–310 (SSY). 2 residues coordinate Mg(2+): Ser-173 and Thr-193.

The protein belongs to the TRAFAC class OBG-HflX-like GTPase superfamily. OBG GTPase family. As to quaternary structure, monomer. It depends on Mg(2+) as a cofactor.

The protein localises to the cytoplasm. Functionally, an essential GTPase which binds GTP, GDP and possibly (p)ppGpp with moderate affinity, with high nucleotide exchange rates and a fairly low GTP hydrolysis rate. Plays a role in control of the cell cycle, stress response, ribosome biogenesis and in those bacteria that undergo differentiation, in morphogenesis control. The sequence is that of GTPase Obg from Orientia tsutsugamushi (strain Ikeda) (Rickettsia tsutsugamushi).